Reading from the N-terminus, the 278-residue chain is Trehalose monomycolate transport factor A (278 aa).

Position 1 (Met-1) is a topological domain, periplasmic. Residues 2–22 traverse the membrane as a helical segment; that stretch reads VPLWFTLSALCFVGAAVLLYV. Residues 23 to 278 are Cytoplasmic-facing; sequence DIDRRRGLGR…NGREASHFQR (256 aa). A disordered region spans residues 200–278; it reads PPVPQNGSQA…NGREASHFQR (79 aa). The span at 269 to 278 shows a compositional bias: basic and acidic residues; sequence NGREASHFQR.

Monomer. Interacts (via N-terminus) with MmpL3; active trehalose monomycolate (TMM) biosynthesis is not required for the complex formation. Interacts with MSMEG_5308.

It localises to the cell inner membrane. The protein resides in the cell septum. It is found in the cell tip. Its function is as follows. Required for MmpL3-dependent trehalose monomycolate (TMM) transport to the cell wall. Required for growth and cell elongation. The chain is Trehalose monomycolate transport factor A from Mycolicibacterium smegmatis (strain ATCC 700084 / mc(2)155) (Mycobacterium smegmatis).